We begin with the raw amino-acid sequence, 305 residues long: Glycine--tRNA ligase alpha subunit (305 aa).

It belongs to the class-II aminoacyl-tRNA synthetase family. In terms of assembly, tetramer of two alpha and two beta subunits.

Its subcellular location is the cytoplasm. It catalyses the reaction tRNA(Gly) + glycine + ATP = glycyl-tRNA(Gly) + AMP + diphosphate. The protein is Glycine--tRNA ligase alpha subunit of Streptococcus pneumoniae (strain ATCC BAA-255 / R6).